The sequence spans 88 residues: Large ribosomal subunit protein bL31B (88 aa).

This sequence belongs to the bacterial ribosomal protein bL31 family. Type B subfamily. In terms of assembly, part of the 50S ribosomal subunit.

This Corynebacterium glutamicum (strain R) protein is Large ribosomal subunit protein bL31B.